Here is an 828-residue protein sequence, read N- to C-terminus: Kinesin-associated protein 3 (828 aa).

ARM repeat units lie at residues 332 to 372 (YVEN…NLSF), 373 to 411 (DTDL…HVSQ), and 577 to 611 (DDSC…CQIV).

As to quaternary structure, heterotrimer of a 115 kDa subunit (KAP115) and two kinesin-like subunits of 95 kDa (KRP95) and 85 kDa (KRP85).

Its function is as follows. Binds to the tail domain of the KRP85/KRP95 heterodimer to form a heterotrimeric kinesin-II complex and may regulate the spindle vesicle targeting of this complex. The protein is Kinesin-associated protein 3 (KAP115) of Strongylocentrotus purpuratus (Purple sea urchin).